A 281-amino-acid chain; its full sequence is Pantothenate synthetase (281 aa).

30-37 provides a ligand contact to ATP; it reads MGYLHEGH. The active-site Proton donor is the His37. Gln61 is a (R)-pantoate binding site. Position 61 (Gln61) interacts with beta-alanine. 147 to 150 lines the ATP pocket; that stretch reads GQKD. (R)-pantoate is bound at residue Gln153. Residues Val176 and 184 to 187 each bind ATP; that span reads MSSR.

Belongs to the pantothenate synthetase family. Homodimer.

The protein localises to the cytoplasm. It catalyses the reaction (R)-pantoate + beta-alanine + ATP = (R)-pantothenate + AMP + diphosphate + H(+). Its pathway is cofactor biosynthesis; (R)-pantothenate biosynthesis; (R)-pantothenate from (R)-pantoate and beta-alanine: step 1/1. Catalyzes the condensation of pantoate with beta-alanine in an ATP-dependent reaction via a pantoyl-adenylate intermediate. In Heliobacterium modesticaldum (strain ATCC 51547 / Ice1), this protein is Pantothenate synthetase.